We begin with the raw amino-acid sequence, 373 residues long: 3 beta-hydroxysteroid dehydrogenase/Delta 5--&gt;4-isomerase type 3 (373 aa).

Catalysis depends on Y155, which acts as the Proton acceptor. K159 lines the NAD(+) pocket. Residues 288–308 (VPILYWLAFLLETVSFLLSPI) traverse the membrane as a helical segment.

Belongs to the 3-beta-HSD family. In terms of tissue distribution, liver and kidney. Greater expression in liver.

The protein resides in the endoplasmic reticulum membrane. The protein localises to the mitochondrion membrane. The enzyme catalyses a 3beta-hydroxy-Delta(5)-steroid + NAD(+) = a 3-oxo-Delta(5)-steroid + NADH + H(+). It carries out the reaction a 3-oxo-Delta(5)-steroid = a 3-oxo-Delta(4)-steroid. The protein operates within lipid metabolism; steroid biosynthesis. In terms of biological role, 3-beta-HSD is a bifunctional enzyme, that catalyzes the oxidative conversion of Delta(5)-ene-3-beta-hydroxy steroid, and the oxidative conversion of ketosteroids. The 3-beta-HSD enzymatic system plays a crucial role in the biosynthesis of all classes of hormonal steroids. The sequence is that of 3 beta-hydroxysteroid dehydrogenase/Delta 5--&gt;4-isomerase type 3 (Hsd3b3) from Mus musculus (Mouse).